A 231-amino-acid chain; its full sequence is 2-C-methyl-D-erythritol 4-phosphate cytidylyltransferase (231 aa).

Belongs to the IspD/TarI cytidylyltransferase family. IspD subfamily.

It carries out the reaction 2-C-methyl-D-erythritol 4-phosphate + CTP + H(+) = 4-CDP-2-C-methyl-D-erythritol + diphosphate. It functions in the pathway isoprenoid biosynthesis; isopentenyl diphosphate biosynthesis via DXP pathway; isopentenyl diphosphate from 1-deoxy-D-xylulose 5-phosphate: step 2/6. Its function is as follows. Catalyzes the formation of 4-diphosphocytidyl-2-C-methyl-D-erythritol from CTP and 2-C-methyl-D-erythritol 4-phosphate (MEP). This is 2-C-methyl-D-erythritol 4-phosphate cytidylyltransferase from Xylella fastidiosa (strain 9a5c).